Reading from the N-terminus, the 323-residue chain is Cytochrome c biogenesis protein CcsA (323 aa).

Helical transmembrane passes span 17-37 (VVSI…IVGF), 44-64 (GMII…FFSG), 68-88 (FSDL…FYMV), 98-118 (LSTI…SGLL), 143-163 (MILG…ILVI), 229-249 (IISL…VWAN), 262-279 (ETWA…LHSR), and 291-311 (IVAS…NLLG).

This sequence belongs to the CcmF/CycK/Ccl1/NrfE/CcsA family. As to quaternary structure, may interact with Ccs1.

The protein resides in the plastid. Its subcellular location is the chloroplast thylakoid membrane. In terms of biological role, required during biogenesis of c-type cytochromes (cytochrome c6 and cytochrome f) at the step of heme attachment. The sequence is that of Cytochrome c biogenesis protein CcsA from Lotus japonicus (Lotus corniculatus var. japonicus).